We begin with the raw amino-acid sequence, 339 residues long: Anthranilate phosphoribosyltransferase (339 aa).

Residues Gly78, 81–82, Thr86, 88–91, 106–114, and Ser118 each bind 5-phospho-alpha-D-ribose 1-diphosphate; these read GD, NAST, and KHGNRSVTS. Anthranilate is bound at residue Gly78. Ser90 is a binding site for Mg(2+). Position 109 (Asn109) interacts with anthranilate. Anthranilate is bound at residue Arg164. Residues Asp225 and Glu226 each coordinate Mg(2+). Residues 248–265 are compositionally biased toward basic and acidic residues; that stretch reads TVAPEDVGLDRADPKDVA. The interval 248–271 is disordered; it reads TVAPEDVGLDRADPKDVAGADPET.

This sequence belongs to the anthranilate phosphoribosyltransferase family. As to quaternary structure, homodimer. The cofactor is Mg(2+).

The catalysed reaction is N-(5-phospho-beta-D-ribosyl)anthranilate + diphosphate = 5-phospho-alpha-D-ribose 1-diphosphate + anthranilate. The protein operates within amino-acid biosynthesis; L-tryptophan biosynthesis; L-tryptophan from chorismate: step 2/5. Functionally, catalyzes the transfer of the phosphoribosyl group of 5-phosphorylribose-1-pyrophosphate (PRPP) to anthranilate to yield N-(5'-phosphoribosyl)-anthranilate (PRA). This Methanopyrus kandleri (strain AV19 / DSM 6324 / JCM 9639 / NBRC 100938) protein is Anthranilate phosphoribosyltransferase.